A 108-amino-acid polypeptide reads, in one-letter code: Large ribosomal subunit protein uL24 (108 aa).

A disordered region spans residues 46-65; the sequence is RHTRVQQSSRGSQSGGIVTQ. Residues 51–61 are compositionally biased toward low complexity; it reads QQSSRGSQSGG.

Belongs to the universal ribosomal protein uL24 family. In terms of assembly, part of the 50S ribosomal subunit.

Functionally, one of two assembly initiator proteins, it binds directly to the 5'-end of the 23S rRNA, where it nucleates assembly of the 50S subunit. In terms of biological role, one of the proteins that surrounds the polypeptide exit tunnel on the outside of the subunit. The protein is Large ribosomal subunit protein uL24 of Parafrankia sp. (strain EAN1pec).